A 418-amino-acid polypeptide reads, in one-letter code: uncharacterized protein (418 aa).

Positions 282–297 are enriched in basic and acidic residues; it reads EEHSSIAKLDSEEKIR. Residues 282 to 346 are disordered; the sequence is EEHSSIAKLD…SASVDDVSEE (65 aa). Residues 304 to 316 are compositionally biased toward low complexity; the sequence is SSTSLSPDPTSDN. Polar residues predominate over residues 322–337; the sequence is WVSSQDTSKNSSNLAS.

This is an uncharacterized protein from Schizosaccharomyces pombe (strain 972 / ATCC 24843) (Fission yeast).